The primary structure comprises 365 residues: IgG receptor FcRn large subunit p51 (365 aa).

Positions 1-23 (MGVPRPQPWALGLLLFLLPGSLG) are cleaved as a signal peptide. The alpha-1 stretch occupies residues 24 to 110 (AESHLSLLYH…AFKALGGKGP (87 aa)). Residues 24 to 297 (AESHLSLLYH…VELESPAKSS (274 aa)) lie on the Extracellular side of the membrane. The alpha-2 stretch occupies residues 111 to 200 (YTLQGLLGCE…ERGRGNLEWK (90 aa)). Intrachain disulfides connect Cys-119–Cys-182 and Cys-221–Cys-275. The N-linked (GlcNAc...) asparagine glycan is linked to Asn-125. Residues 201-290 (EPPSMRLKAR…GLAQPLRVEL (90 aa)) are alpha-3. The region spanning 202 to 289 (PPSMRLKARP…AGLAQPLRVE (88 aa)) is the Ig-like C1-type domain. The tract at residues 291–297 (ESPAKSS) is connecting peptide. The helical transmembrane segment at 298 to 321 (VLVVGIVIGVLLLTAAAVGGALLW) threads the bilayer. The Cytoplasmic segment spans residues 322–365 (RRMRSGLPAPWISLRGDDTGVLLPTPGEAQDADLKDVNVIPATA). Position 334 is a phosphoserine (Ser-334).

This sequence belongs to the immunoglobulin superfamily. As to quaternary structure, fcRn complex consists of two subunits: p51, and p14 which is equivalent to beta-2-microglobulin. It forms an MHC class I-like heterodimer. Interacts with albumin/ALB; this interaction regulates ALB homeostasis. (Microbial infection) Interacts with Echovirus 6, Echovirus 11 and Echovirus 30 capsid protein VP1. In terms of tissue distribution, expressed in full-term placenta, heart, lung, liver, muscle, kidney, pancreas, and both fetal and adult small intestine.

The protein resides in the cell membrane. Its subcellular location is the endosome membrane. Cell surface receptor that transfers passive humoral immunity from the mother to the newborn. Binds to the Fc region of monomeric immunoglobulin gamma and mediates its selective uptake from milk. IgG in the milk is bound at the apical surface of the intestinal epithelium. The resultant FcRn-IgG complexes are transcytosed across the intestinal epithelium and IgG is released from FcRn into blood or tissue fluids. Throughout life, contributes to effective humoral immunity by recycling IgG and extending its half-life in the circulation. Mechanistically, monomeric IgG binding to FcRn in acidic endosomes of endothelial and hematopoietic cells recycles IgG to the cell surface where it is released into the circulation. In addition of IgG, regulates homeostasis of the other most abundant circulating protein albumin/ALB. In terms of biological role, (Microbial infection) Acts as an uncoating receptor for a panel of echoviruses including Echovirus 5, 6, 7, 9, 11, 13, 25 and 29. This is IgG receptor FcRn large subunit p51 (FCGRT) from Homo sapiens (Human).